Reading from the N-terminus, the 106-residue chain is UPF0145 protein PFL_3418 (106 aa).

Belongs to the UPF0145 family.

This chain is UPF0145 protein PFL_3418, found in Pseudomonas fluorescens (strain ATCC BAA-477 / NRRL B-23932 / Pf-5).